The chain runs to 100 residues: NAD(P)H-quinone oxidoreductase subunit 4L, chloroplastic (100 aa).

3 helical membrane passes run 2 to 22, 28 to 48, and 61 to 81; these read ILQH…FGLI, VKIL…LVIF, and LFGL…LAIL.

It belongs to the complex I subunit 4L family. As to quaternary structure, NDH is composed of at least 16 different subunits, 5 of which are encoded in the nucleus.

It is found in the plastid. The protein resides in the chloroplast thylakoid membrane. The catalysed reaction is a plastoquinone + NADH + (n+1) H(+)(in) = a plastoquinol + NAD(+) + n H(+)(out). It carries out the reaction a plastoquinone + NADPH + (n+1) H(+)(in) = a plastoquinol + NADP(+) + n H(+)(out). NDH shuttles electrons from NAD(P)H:plastoquinone, via FMN and iron-sulfur (Fe-S) centers, to quinones in the photosynthetic chain and possibly in a chloroplast respiratory chain. The immediate electron acceptor for the enzyme in this species is believed to be plastoquinone. Couples the redox reaction to proton translocation, and thus conserves the redox energy in a proton gradient. This is NAD(P)H-quinone oxidoreductase subunit 4L, chloroplastic from Chara vulgaris (Common stonewort).